Reading from the N-terminus, the 185-residue chain is ATP-dependent protease subunit HslV (185 aa).

The active site involves T12. Na(+) is bound by residues A168, C171, and T174.

Belongs to the peptidase T1B family. HslV subfamily. A double ring-shaped homohexamer of HslV is capped on each side by a ring-shaped HslU homohexamer. The assembly of the HslU/HslV complex is dependent on binding of ATP.

It localises to the cytoplasm. It carries out the reaction ATP-dependent cleavage of peptide bonds with broad specificity.. Its activity is regulated as follows. Allosterically activated by HslU binding. In terms of biological role, protease subunit of a proteasome-like degradation complex believed to be a general protein degrading machinery. The protein is ATP-dependent protease subunit HslV of Cereibacter sphaeroides (strain ATCC 17025 / ATH 2.4.3) (Rhodobacter sphaeroides).